Here is a 230-residue protein sequence, read N- to C-terminus: Ribose-5-phosphate isomerase A (230 aa).

Substrate-binding positions include 32 to 35, 85 to 88, and 98 to 101; these read TGST, DGAD, and KGGG. Catalysis depends on E107, which acts as the Proton acceptor. K125 contacts substrate.

This sequence belongs to the ribose 5-phosphate isomerase family. In terms of assembly, homodimer.

It catalyses the reaction aldehydo-D-ribose 5-phosphate = D-ribulose 5-phosphate. The protein operates within carbohydrate degradation; pentose phosphate pathway; D-ribose 5-phosphate from D-ribulose 5-phosphate (non-oxidative stage): step 1/1. Catalyzes the reversible conversion of ribose-5-phosphate to ribulose 5-phosphate. The sequence is that of Ribose-5-phosphate isomerase A from Burkholderia ambifaria (strain MC40-6).